Reading from the N-terminus, the 186-residue chain is C-type lectin domain family 19 member A (186 aa).

An N-terminal signal peptide occupies residues 1–19; the sequence is MQRWTLWAAAFLTLHSAQA. Positions 47–179 constitute a C-type lectin domain; that stretch reads FKGHCYRFFP…CSRKFPFVCK (133 aa). The N-linked (GlcNAc...) asparagine glycan is linked to asparagine 58. Cystine bridges form between cysteine 68–cysteine 178 and cysteine 151–cysteine 170.

Its subcellular location is the secreted. In Homo sapiens (Human), this protein is C-type lectin domain family 19 member A.